Reading from the N-terminus, the 576-residue chain is MSNESTRVTVSRGCTASDECAQALERTNDELDRESSVSESRSDEESHEKLSRRRFPTLGIGIWLDLKDRIPYYKSDWVDAFNYRVIPSIVDTYFNNLLPAIAFAQDMFDRTDNSYGVNEVLLSSAMAGIVFGVLGGQPLCIVGVTGPISIFNYTVYEIIKPLNTSYFGFMFWICMWSMIFHLVLAFTNAVCLLQYVTTFPCDIFGLFINVVYIQKGIQILTRQFSAKSGEKSVQDGFASVVVALVMTAFGLFFKLFHYYPLFSHRIRTFISDYSTALSVLFWSSFTHFGGYLHDVKFKKLPITKAFFPTSKVNRPQNTWLAYEPIPVKDVFIALPFGIFLTILFYFDHNVSSLMAQRHQYKLKKPSSFHYDFALLGLTTCISGVLGIPAPNGLIPQAPLHTETLLVRDSNQKVISCVEQRFTNTFQGLMILGTMTRPLLVCLGEIPQAVLSGLFFIMGINGLMTNSIIQRLVFLFSDPNRRDNTSPLMKVSKKSMLIFLSFSLTGFAGEFAITNTIAAIGFPLVLLLSVLVSFSFAYIFPTEELKILDTNVAQKFTIKNLLLENIRDAKFCDKHED.

The Cytoplasmic portion of the chain corresponds to 1-84 (MSNESTRVTV…SDWVDAFNYR (84 aa)). The segment at 19 to 48 (ECAQALERTNDELDRESSVSESRSDEESHE) is disordered. Over residues 26–48 (RTNDELDRESSVSESRSDEESHE) the composition is skewed to basic and acidic residues. The helical transmembrane segment at 85–105 (VIPSIVDTYFNNLLPAIAFAQ) threads the bilayer. Topologically, residues 106–116 (DMFDRTDNSYG) are extracellular. Residues 117–134 (VNEVLLSSAMAGIVFGVL) traverse the membrane as a helical segment. Residues 135 to 140 (GGQPLC) are Cytoplasmic-facing. The helical transmembrane segment at 141-160 (IVGVTGPISIFNYTVYEIIK) threads the bilayer. Over 161 to 165 (PLNTS) the chain is Extracellular. Residues 166–186 (YFGFMFWICMWSMIFHLVLAF) traverse the membrane as a helical segment. Residues 187-192 (TNAVCL) are Cytoplasmic-facing. The helical transmembrane segment at 193 to 213 (LQYVTTFPCDIFGLFINVVYI) threads the bilayer. The Extracellular portion of the chain corresponds to 214 to 235 (QKGIQILTRQFSAKSGEKSVQD). The helical transmembrane segment at 236-256 (GFASVVVALVMTAFGLFFKLF) threads the bilayer. The Cytoplasmic portion of the chain corresponds to 257–274 (HYYPLFSHRIRTFISDYS). Residues 275-295 (TALSVLFWSSFTHFGGYLHDV) traverse the membrane as a helical segment. At 296 to 329 (KFKKLPITKAFFPTSKVNRPQNTWLAYEPIPVKD) the chain is on the extracellular side. The helical transmembrane segment at 330 to 350 (VFIALPFGIFLTILFYFDHNV) threads the bilayer. Residues 351–373 (SSLMAQRHQYKLKKPSSFHYDFA) lie on the Cytoplasmic side of the membrane. A helical membrane pass occupies residues 374–394 (LLGLTTCISGVLGIPAPNGLI). Over 395–438 (PQAPLHTETLLVRDSNQKVISCVEQRFTNTFQGLMILGTMTRPL) the chain is Extracellular. A helical membrane pass occupies residues 439–459 (LVCLGEIPQAVLSGLFFIMGI). Topologically, residues 460–495 (NGLMTNSIIQRLVFLFSDPNRRDNTSPLMKVSKKSM) are cytoplasmic. The chain crosses the membrane as a helical span at residues 496 to 516 (LIFLSFSLTGFAGEFAITNTI). Residues 517–518 (AA) lie on the Extracellular side of the membrane. The helical transmembrane segment at 519–539 (IGFPLVLLLSVLVSFSFAYIF) threads the bilayer. The Cytoplasmic segment spans residues 540–576 (PTEELKILDTNVAQKFTIKNLLLENIRDAKFCDKHED).

The protein belongs to the anion exchanger (TC 2.A.31) family.

Its subcellular location is the cell membrane. The protein localises to the vacuole membrane. In terms of biological role, functions in boric acid/borate export across the plasma membrane, and thereby protects yeast cells from boron toxicity. Involved in the trafficking of proteins to the vacuole. This is Boron transporter 1 (BOR1) from Saccharomyces cerevisiae (strain ATCC 204508 / S288c) (Baker's yeast).